The sequence spans 359 residues: tRNA-specific 2-thiouridylase MnmA (359 aa).

ATP is bound by residues 6–13 (AMSGGVDS) and Leu32. Cys101 serves as the catalytic Nucleophile. An intrachain disulfide couples Cys101 to Cys193. An ATP-binding site is contributed by Gly125. Residues 143–145 (KDQ) are interaction with tRNA. The Cysteine persulfide intermediate role is filled by Cys193.

The protein belongs to the MnmA/TRMU family.

The protein localises to the cytoplasm. It carries out the reaction S-sulfanyl-L-cysteinyl-[protein] + uridine(34) in tRNA + AH2 + ATP = 2-thiouridine(34) in tRNA + L-cysteinyl-[protein] + A + AMP + diphosphate + H(+). In terms of biological role, catalyzes the 2-thiolation of uridine at the wobble position (U34) of tRNA, leading to the formation of s(2)U34. This chain is tRNA-specific 2-thiouridylase MnmA, found in Mycobacterium sp. (strain JLS).